Here is a 219-residue protein sequence, read N- to C-terminus: Ras-related protein Rab-3B (219 aa).

A2 is subject to N-acetylalanine. 9 residues coordinate GTP: S31, S32, V33, G34, K35, T36, S37, P49, and S53. A Mg(2+)-binding site is contributed by T36. A Switch 1 motif is present at residues D45 to D58. Positions 54 and 77 each coordinate Mg(2+). The short motif at T78–M96 is the Switch 2 element. G80 is a GTP binding site. A Phosphothreonine modification is found at T86. Residues N135, K136, D138, A166, and K167 each contribute to the GTP site. S188 is subject to Phosphoserine. Residues C217 and C219 are each lipidated (S-geranylgeranyl cysteine). A Cysteine methyl ester modification is found at C219.

The protein belongs to the small GTPase superfamily. Rab family. As to quaternary structure, interacts with RIMS1, RIMS2, RPH3A and RPH3AL. The GTP-bound form interacts with GAS8/DRC4 (via coiled-coil domains). Interacts with GDI2, CHM and CHML; phosphorylation at Thr-86 disrupts these interactions. Interacts with MADD (via uDENN domain); the GTP-bound form is preferred for interaction. Mg(2+) serves as cofactor. Phosphorylation of Thr-86 in the switch II region by LRRK2 prevents the association of RAB regulatory proteins, including CHM, CHML and RAB GDP dissociation inhibitor GDI2.

It is found in the cell membrane. The protein resides in the golgi apparatus. It catalyses the reaction GTP + H2O = GDP + phosphate + H(+). With respect to regulation, regulated by guanine nucleotide exchange factors (GEFs) which promote the exchange of bound GDP for free GTP. Regulated by GTPase activating proteins (GAPs) which increase the GTP hydrolysis activity. Inhibited by GDP dissociation inhibitors (GDIs) which prevent Rab-GDP dissociation. In terms of biological role, the small GTPases Rab are key regulators of intracellular membrane trafficking, from the formation of transport vesicles to their fusion with membranes. Rabs cycle between an inactive GDP-bound form and an active GTP-bound form that is able to recruit to membranes different sets of downstream effectors directly responsible for vesicle formation, movement, tethering and fusion. The sequence is that of Ras-related protein Rab-3B (RAB3B) from Bos taurus (Bovine).